A 939-amino-acid chain; its full sequence is MFGNCQKQNCCTQRNNTGICYSVCPPQTVITVPGNVTCNASRIYVNIGRPNNCFGNDGDLYLDTNTNNLYYKRDGVWLLVGNLSGSSGPSGPQGPKGEKGSNGDKGDKGEIGIQGLKGESGADADKGDKGDKGDKGSKGTKGENGDKGNKGDKGDPGIKGSKGEKGSKGDKGSKGDKGDPGIKGESGADADKGDKGDKGSKGDKGDKGIDGNKGEKGSKGDKGDKGDIGLKGESGADADKGDKGDKGSKGDKGDKGDIGPKGESGADADKGDKGDKGSKGDKGDKGTKGESGLIGTKGDKGDKGDKGIKGDKGEAGTSILEGSGVPSPDLGNNGDLYIDGMTGLLYAKINDEWVPVTSIKGDKGDKGDTGLKGESGADADKGEKGDPGNKGDKGNKGDKGSKGDKGDKGDKGDTGLKGESGADADKGDKGGKGEKGDNGEKGSKGEKGEKGEKGDNGEKGDKGDNGEKGEKGEKGEKGDNGEKGEKGDVGIKGESGADADKGDKGEKGDKGVNGDKGDKGSKGDTGIKGEAGTAANKGDKGSKGDKGDKGSKGDIGISIKGDKGDKGDKGSKGDKGDIGIKGESGLSIKGDKGDKGGKGDKGDLGSKGDIGLKGDKGDKGDVGLKGDKGDKGDVGSKGDKGDKGSKGDKGSKGDTGSKGDKGDKGSKGDKGDKGDKGSKGDKGDIGSIGPKGEKGEAGSTNSLYIGSAQLGNAGDFNNEIIPVTGIAYITAVGAGGSGYSGTTGGYGGGGAGGAFINYPVYVSSSQTYSAHVGFGGAQVAGNSNKGENTTITIGNLVLLAGGGEGGTATTGGTGGLVSINGTQITAGAPGGTSGNSGVSSIYINPLVIGGAGGGGGSNGTNAGNGGNYAGFTGGIASPGVNGGGGGGASLFSNGFNGETGAPTTDSGTNYGAGGGGGGNGTQGGNGSLGYVRIDFYSAP.

4 N-linked (GlcNAc...) asparagine; by host glycosylation sites follow: N15, N35, N39, and N82. Over residues 84-95 the composition is skewed to low complexity; that stretch reads SGSSGPSGPQGP. Disordered regions lie at residues 84–332 and 358–697; these read SGSS…DLGN and SIKG…KGEA. Collagen-like domains lie at 88–147, 148–207, 211–330, 364–423, 427–486, 493–552, 564–622, and 638–697; these read GPSG…NGDK, GNKG…KGDK, GNKG…SPDL, GDKG…SGAD, GDKG…KGEK, GESG…KGSK, GDKG…KGDV, and GDKG…KGEA. 13 stretches are compositionally biased toward basic and acidic residues: residues 96 to 110, 123 to 182, 189 to 230, 237 to 260, 267 to 288, 297 to 314, 360 to 371, 378 to 416, 423 to 491, 498 to 527, 537 to 552, 560 to 580, and 589 to 684; these read KGEK…DKGE, DADK…DPGI, DADK…DIGL, DADK…DIGP, DADK…KGTK, KGDK…DKGE, KGDKGDKGDTGL, DADK…DTGL, DADK…DVGI, DADK…DTGI, KGDK…KGSK, KGDK…DIGI, and KGDK…DKGD. Residues N788, N820, N858, N919, and N925 are each glycosylated (N-linked (GlcNAc...) asparagine; by host). Residues 896–923 form a disordered region; the sequence is NGETGAPTTDSGTNYGAGGGGGGNGTQG. A compositionally biased stretch (gly residues) spans 910 to 923; sequence YGAGGGGGGNGTQG.

Post-translationally, may be hydroxylated on lysine by the viral-encoded procollagen-lysine,2-oxoglutarate 5-dioxygenase.

The protein localises to the virion. Its function is as follows. May participate in the formation of a layer of cross-linked glycosylated fibrils at the viral surface thus giving it a hairy-like appearance. The sequence is that of Collagen-like protein 3 from Acanthamoeba polyphaga (Amoeba).